Here is a 160-residue protein sequence, read N- to C-terminus: Ribosomal RNA large subunit methyltransferase H (160 aa).

S-adenosyl-L-methionine-binding positions include L76, G108, and 127 to 132; that span reads LGELTW.

The protein belongs to the RNA methyltransferase RlmH family. Homodimer.

It is found in the cytoplasm. The catalysed reaction is pseudouridine(1915) in 23S rRNA + S-adenosyl-L-methionine = N(3)-methylpseudouridine(1915) in 23S rRNA + S-adenosyl-L-homocysteine + H(+). Specifically methylates the pseudouridine at position 1915 (m3Psi1915) in 23S rRNA. In Brucella anthropi (strain ATCC 49188 / DSM 6882 / CCUG 24695 / JCM 21032 / LMG 3331 / NBRC 15819 / NCTC 12168 / Alc 37) (Ochrobactrum anthropi), this protein is Ribosomal RNA large subunit methyltransferase H.